A 357-amino-acid polypeptide reads, in one-letter code: MIKNLSNMKNDNQKREKCCEYIEALEEERRKINVFQRELPLCVELVTQAIEAYKREISGTSTDNLYGQSECSEQTTGECGRILDLFIPIKHSSTSIEEEVDDKDDDDEEHQSHETDIDFDDKNMKSEWLKSVQLWNQSDAVVSNNRQDRSQEKTETLVELIKINDEAAKKNNNIKSPVTTSDGGSGGGGGRRGQRKNRRCWSQELHRRFLNALKQLGGPHVATPKQIRDIMKVDGLTNDEVKSHLQKYRLHARRPSQTTPNNRNSQTQHFVVVGGIWVPQTNHSTANAVNAVASGETTGIYGPMVSSLPSEWPRHSNFGRKISEDRSRCSNNGFFRCSSPAMSCSTRTKTKDAKIIS.

Disordered stretches follow at residues 94–117 and 171–198; these read TSIE…ETDI and NNNI…RKNR. The span at 96–109 shows a compositional bias: acidic residues; sequence IEEEVDDKDDDDEE. The segment covering 171–182 has biased composition (polar residues); the sequence is NNNIKSPVTTSD. In terms of domain architecture, HTH myb-type spans 193-253; it reads GQRKNRRCWS…HLQKYRLHAR (61 aa). Residues 224–249 constitute a DNA-binding region (H-T-H motif); sequence PKQIRDIMKVDGLTNDEVKSHLQKYR.

Its subcellular location is the nucleus. Probable factor involved in nitrate and phosphate signaling in roots. Integrates nitrate and phosphate starvation responses and adaptation of root architecture, depending on nutrient availabilities. Acts downstream of the nitrate sensor and transporter NPF6.3/NRT1.1. Represses primary root development in response to phosphate deficiency conditions, only when nitrate is present. The chain is Transcription factor HHO1 from Arabidopsis thaliana (Mouse-ear cress).